A 310-amino-acid chain; its full sequence is DDRGK domain-containing protein 1 (310 aa).

A helical transmembrane segment spans residues M1 to V21. Residues K22 to A310 lie on the Cytoplasmic side of the membrane. 2 disordered regions span residues V38 to Q85 and K110 to E162. The span at P52–Q70 shows a compositional bias: basic residues. The segment covering D76 to Q85 has biased composition (acidic residues).

Belongs to the DDRGK1 family.

Its subcellular location is the endoplasmic reticulum membrane. Its function is as follows. Substrate adapter for ufmylation, the covalent attachment of the ubiquitin-like modifier UFM1 to substrate proteins. The sequence is that of DDRGK domain-containing protein 1 from Trichoplax adhaerens (Trichoplax reptans).